Here is an 82-residue protein sequence, read N- to C-terminus: RNA-binding protein Hfq (82 aa).

In terms of domain architecture, Sm spans 9-68 (DPYLNTLRKERVPVSIYLVNGIKLQGQIESFDQFVILLKNTVSQMVYKTAISTVVPSRPV).

Belongs to the Hfq family. Homohexamer.

Its function is as follows. RNA chaperone that binds small regulatory RNA (sRNAs) and mRNAs to facilitate mRNA translational regulation in response to envelope stress, environmental stress and changes in metabolite concentrations. Also binds with high specificity to tRNAs. The chain is RNA-binding protein Hfq from Pseudomonas aeruginosa.